A 365-amino-acid polypeptide reads, in one-letter code: Pre-small/secreted glycoprotein (365 aa).

The N-terminal stretch at 1–32 (MGASGILQLPRERFRKTSFFVWVIILFHKVFS) is a signal peptide. Asn40 carries N-linked (GlcNAc...) asparagine; by host glycosylation. 2 disulfide bridges follow: Cys108–Cys135 and Cys121–Cys147. N-linked (GlcNAc...) asparagine; by host glycosylation is found at Asn204, Asn228, Asn257, and Asn268.

This sequence belongs to the filoviruses glycoprotein family. In terms of assembly, homodimer; disulfide-linked. The homodimers are linked by two disulfide bonds in a parallel orientation. As to quaternary structure, monomer. Post-translationally, this precursor is processed into mature sGP and delta-peptide by host furin or furin-like proteases. The cleavage site corresponds to the furin optimal cleavage sequence [KR]-X-[KR]-R. N-glycosylated. In terms of processing, O-glycosylated.

It localises to the secreted. Seems to possess an anti-inflammatory activity as it can reverse the barrier-decreasing effects of TNF alpha. Might therefore contribute to the lack of inflammatory reaction seen during infection in spite the of extensive necrosis and massive virus production. Does not seem to be involved in activation of primary macrophages. Does not seem to interact specifically with neutrophils. In terms of biological role, viroporin that permeabilizes mammalian cell plasma membranes. It acts by altering permeation of ionic compounds and small molecules. This activity may lead to viral enterotoxic activity. In Epomops franqueti (Franquet's epauletted fruit bat), this protein is Pre-small/secreted glycoprotein (GP).